We begin with the raw amino-acid sequence, 877 residues long: Dynamin (877 aa).

Residues 23–289 (QLDLPQIAVV…LTNHIRDTLP (267 aa)) form the Dynamin-type G domain. Residues 33–40 (GGQSAGKS) are G1 motif. Residue 33–41 (GGQSAGKSS) participates in GTP binding. The tract at residues 59–61 (VTR) is G2 motif. The interval 131-134 (DLPG) is G3 motif. The segment at 200 to 203 (TKLD) is G4 motif. GTP is bound by residues 200–206 (TKLDLMD) and 231–234 (NRSQ). A G5 motif region spans residues 230 to 233 (VNRS). The 109-residue stretch at 513 to 621 (QVIRKGHMVI…WKASFLRAGV (109 aa)) folds into the PH domain. Disordered stretches follow at residues 623-648 (PEKQETQENGDESASEESSSDPQLER) and 740-834 (TVSS…SGAV). The span at 630 to 641 (ENGDESASEESS) shows a compositional bias: acidic residues. Residues 650 to 741 (VETIRNLVDS…IIGDVSMATV (92 aa)) form the GED domain. A phosphoserine mark is found at Ser-756, Ser-764, and Ser-767. A compositionally biased stretch (pro residues) spans 788–826 (PPLPPSTGRPAPAIPNRPGGGAPPLPGGRPGGSLPPPML).

This sequence belongs to the TRAFAC class dynamin-like GTPase superfamily. Dynamin/Fzo/YdjA family.

The protein resides in the cytoplasm. The protein localises to the cytoskeleton. The enzyme catalyses GTP + H2O = GDP + phosphate + H(+). In terms of biological role, microtubule-associated force-producing protein which is involved in the production of microtubule bundles and which is able to bind and hydrolyze GTP. Implicated in endocytic protein sorting. This chain is Dynamin (shi), found in Drosophila melanogaster (Fruit fly).